We begin with the raw amino-acid sequence, 592 residues long: Aspartate--tRNA(Asp/Asn) ligase (592 aa).

Residue glutamate 176 coordinates L-aspartate. The aspartate stretch occupies residues 200–203 (QIFK). Residue arginine 222 coordinates L-aspartate. ATP contacts are provided by residues 222-224 (RDE) and glutamine 231. Histidine 450 serves as a coordination point for L-aspartate. Residue glutamate 484 participates in ATP binding. Position 491 (arginine 491) interacts with L-aspartate. 536–539 (GLDR) contacts ATP.

This sequence belongs to the class-II aminoacyl-tRNA synthetase family. Type 1 subfamily. In terms of assembly, homodimer.

The protein localises to the cytoplasm. The enzyme catalyses tRNA(Asx) + L-aspartate + ATP = L-aspartyl-tRNA(Asx) + AMP + diphosphate. Its function is as follows. Aspartyl-tRNA synthetase with relaxed tRNA specificity since it is able to aspartylate not only its cognate tRNA(Asp) but also tRNA(Asn). Reaction proceeds in two steps: L-aspartate is first activated by ATP to form Asp-AMP and then transferred to the acceptor end of tRNA(Asp/Asn). This is Aspartate--tRNA(Asp/Asn) ligase from Anoxybacillus flavithermus (strain DSM 21510 / WK1).